A 512-amino-acid chain; its full sequence is Glutathione-binding protein GsiB (512 aa).

Positions 1–26 (MTQFITHKWLAALGLASSIAAFPALA) are cleaved as a signal peptide.

This sequence belongs to the bacterial solute-binding protein 5 family. In terms of assembly, the complex is composed of two ATP-binding proteins (GsiA), two transmembrane proteins (GsiC and GsiD) and a solute-binding protein (GsiB).

It localises to the periplasm. Part of the ABC transporter complex GsiABCD involved in glutathione import. Binds glutathione. The chain is Glutathione-binding protein GsiB from Salmonella typhimurium (strain LT2 / SGSC1412 / ATCC 700720).